The sequence spans 344 residues: Aspartate carbamoyltransferase catalytic subunit (344 aa).

Residues 1 to 30 (MPESPPLPKRSPLMTSSTTRPASDYPPGGD) are disordered. The carbamoyl phosphate site is built by arginine 88 and threonine 89. Lysine 116 lines the L-aspartate pocket. Carbamoyl phosphate is bound by residues arginine 138, histidine 166, and glutamine 169. Residues arginine 199 and arginine 253 each contribute to the L-aspartate site. Carbamoyl phosphate is bound by residues glycine 294 and proline 295.

Belongs to the aspartate/ornithine carbamoyltransferase superfamily. ATCase family. In terms of assembly, heterododecamer (2C3:3R2) of six catalytic PyrB chains organized as two trimers (C3), and six regulatory PyrI chains organized as three dimers (R2).

It carries out the reaction carbamoyl phosphate + L-aspartate = N-carbamoyl-L-aspartate + phosphate + H(+). The protein operates within pyrimidine metabolism; UMP biosynthesis via de novo pathway; (S)-dihydroorotate from bicarbonate: step 2/3. Catalyzes the condensation of carbamoyl phosphate and aspartate to form carbamoyl aspartate and inorganic phosphate, the committed step in the de novo pyrimidine nucleotide biosynthesis pathway. The protein is Aspartate carbamoyltransferase catalytic subunit of Sphingopyxis alaskensis (strain DSM 13593 / LMG 18877 / RB2256) (Sphingomonas alaskensis).